We begin with the raw amino-acid sequence, 445 residues long: Acyl-lipid (7-3)-desaturase (445 aa).

Residues 11 to 91 (VAELRAAEVA…MSKFFVGSLD (81 aa)) form the Cytochrome b5 heme-binding domain. Heme contacts are provided by histidine 50 and histidine 73. 2 consecutive transmembrane segments (helical) span residues 126 to 146 (YWLK…YMLL) and 148 to 168 (GKTL…GLNI). The short motif at 170-174 (HDANH) is the Histidine box-1 element. A Histidine box-2 motif is present at residues 205–210 (HVVMHH). The next 3 helical transmembrane spans lie at 247–267 (ILPG…LELL), 283–303 (LFAP…ALPL), and 312–332 (ALCI…FFFI). Positions 380 to 384 (QIEHH) match the Histidine box-3 motif.

The protein belongs to the fatty acid desaturase type 1 family. Fe(2+) serves as cofactor.

Its subcellular location is the membrane. The enzyme catalyses a (7Z,10Z,13Z,16Z,19Z)-docosapentaenoyl-containing glycerolipid + 2 Fe(II)-[cytochrome b5] + O2 + 2 H(+) = a (4Z,7Z,10Z,13Z,16Z,19Z)-docosahexaenoyl-containing glycerolipid + 2 Fe(III)-[cytochrome b5] + 2 H2O. It catalyses the reaction a (7Z,10Z,13Z,16Z)-docosatetraenoyl-containing glycerolipid + 2 Fe(II)-[cytochrome b5] + O2 + 2 H(+) = a (4Z,7Z,10Z,13Z,16Z)-docosapentaenoyl-containing glycerolipid + 2 Fe(III)-[cytochrome b5] + 2 H2O. Fatty acid desaturase that introduces a cis double bond at the 4-position in 22-carbon polyunsaturated fatty acids that contain a Delta(7) double bond, resulting in the production of delta-4 desaturated fatty acid docosahexanoic acid (DHA). Mediates desaturation of 22:5n-3 and 22:4n-6 into 22:6n-3 and 22:5n-6 respectively. The chain is Acyl-lipid (7-3)-desaturase from Diacronema lutheri (Unicellular marine alga).